We begin with the raw amino-acid sequence, 152 residues long: Ribosome maturation factor RimP (152 aa).

Belongs to the RimP family.

It is found in the cytoplasm. Required for maturation of 30S ribosomal subunits. This Burkholderia vietnamiensis (strain G4 / LMG 22486) (Burkholderia cepacia (strain R1808)) protein is Ribosome maturation factor RimP.